The chain runs to 33 residues: MNLEVIAQLTVLALIVASGPLVIALLAARKGNL.

A helical membrane pass occupies residues 5-25; the sequence is VIAQLTVLALIVASGPLVIAL.

It belongs to the Psb30/Ycf12 family. As to quaternary structure, PSII is composed of 1 copy each of membrane proteins PsbA, PsbB, PsbC, PsbD, PsbE, PsbF, PsbH, PsbI, PsbJ, PsbK, PsbL, PsbM, PsbT, PsbX, PsbY, PsbZ, Psb30/Ycf12, peripheral proteins of the oxygen-evolving complex and a large number of cofactors. It forms dimeric complexes.

It localises to the plastid. It is found in the chloroplast thylakoid membrane. Its function is as follows. A core subunit of photosystem II (PSII), probably helps stabilize the reaction center. In Marchantia polymorpha (Common liverwort), this protein is Photosystem II reaction center protein Psb30.